Reading from the N-terminus, the 126-residue chain is Small ribosomal subunit protein uS12 (126 aa).

The segment at 1-26 (MPTINQLVRKGRASETTKSKSPALQD) is disordered. 3-methylthioaspartic acid is present on Asp89. The segment at 102-126 (LDTQGVKDRRQARSKYGAKRAKAAK) is disordered. The segment covering 113 to 126 (ARSKYGAKRAKAAK) has biased composition (basic residues).

It belongs to the universal ribosomal protein uS12 family. As to quaternary structure, part of the 30S ribosomal subunit. Contacts proteins S8 and S17. May interact with IF1 in the 30S initiation complex.

With S4 and S5 plays an important role in translational accuracy. In terms of biological role, interacts with and stabilizes bases of the 16S rRNA that are involved in tRNA selection in the A site and with the mRNA backbone. Located at the interface of the 30S and 50S subunits, it traverses the body of the 30S subunit contacting proteins on the other side and probably holding the rRNA structure together. The combined cluster of proteins S8, S12 and S17 appears to hold together the shoulder and platform of the 30S subunit. The chain is Small ribosomal subunit protein uS12 from Burkholderia mallei (strain ATCC 23344).